A 338-amino-acid polypeptide reads, in one-letter code: Large ribosomal subunit protein uL3 (338 aa).

Residues 230–253 (HRKGHRRTGTIGPQAPALMFTQPR) form a disordered region.

It belongs to the universal ribosomal protein uL3 family. As to quaternary structure, part of the 50S ribosomal subunit. Forms a cluster with proteins L14 and L24e.

Functionally, one of the primary rRNA binding proteins, it binds directly near the 3'-end of the 23S rRNA, where it nucleates assembly of the 50S subunit. This chain is Large ribosomal subunit protein uL3, found in Pyrobaculum neutrophilum (strain DSM 2338 / JCM 9278 / NBRC 100436 / V24Sta) (Thermoproteus neutrophilus).